A 394-amino-acid chain; its full sequence is Putative 8-amino-7-oxononanoate synthase (394 aa).

A substrate-binding site is contributed by Arg-30. Position 117-118 (117-118 (GY)) interacts with pyridoxal 5'-phosphate. A substrate-binding site is contributed by His-142. Pyridoxal 5'-phosphate is bound by residues Ser-190, 215–218 (DEAH), and 246–249 (TLSK). Lys-249 is subject to N6-(pyridoxal phosphate)lysine. A substrate-binding site is contributed by Thr-364.

The protein belongs to the class-II pyridoxal-phosphate-dependent aminotransferase family. BioF subfamily. In terms of assembly, homodimer. Requires pyridoxal 5'-phosphate as cofactor.

The catalysed reaction is 6-carboxyhexanoyl-[ACP] + L-alanine + H(+) = (8S)-8-amino-7-oxononanoate + holo-[ACP] + CO2. It functions in the pathway cofactor biosynthesis; biotin biosynthesis. In terms of biological role, catalyzes the decarboxylative condensation of pimeloyl-[acyl-carrier protein] and L-alanine to produce 8-amino-7-oxononanoate (AON), [acyl-carrier protein], and carbon dioxide. In Nostoc punctiforme (strain ATCC 29133 / PCC 73102), this protein is Putative 8-amino-7-oxononanoate synthase (bioF).